A 269-amino-acid polypeptide reads, in one-letter code: 4-hydroxy-tetrahydrodipicolinate reductase (269 aa).

NAD(+)-binding positions include 11–16 (GASGRM) and Glu-37. Arg-38 is an NADP(+) binding site. Residues 101 to 103 (GTT) and 125 to 128 (AGNM) contribute to the NAD(+) site. The active-site Proton donor/acceptor is the His-158. His-159 is a binding site for (S)-2,3,4,5-tetrahydrodipicolinate. Residue Lys-162 is the Proton donor of the active site. (S)-2,3,4,5-tetrahydrodipicolinate is bound at residue 168–169 (GT).

Belongs to the DapB family.

Its subcellular location is the cytoplasm. It catalyses the reaction (S)-2,3,4,5-tetrahydrodipicolinate + NAD(+) + H2O = (2S,4S)-4-hydroxy-2,3,4,5-tetrahydrodipicolinate + NADH + H(+). The enzyme catalyses (S)-2,3,4,5-tetrahydrodipicolinate + NADP(+) + H2O = (2S,4S)-4-hydroxy-2,3,4,5-tetrahydrodipicolinate + NADPH + H(+). It participates in amino-acid biosynthesis; L-lysine biosynthesis via DAP pathway; (S)-tetrahydrodipicolinate from L-aspartate: step 4/4. Its function is as follows. Catalyzes the conversion of 4-hydroxy-tetrahydrodipicolinate (HTPA) to tetrahydrodipicolinate. The chain is 4-hydroxy-tetrahydrodipicolinate reductase from Ruegeria pomeroyi (strain ATCC 700808 / DSM 15171 / DSS-3) (Silicibacter pomeroyi).